The following is a 341-amino-acid chain: Methionine import ATP-binding protein MetN 2 (341 aa).

The ABC transporter domain occupies 2–241; sequence IELKEVVKEY…PQHTVTKRFV (240 aa). 38–45 contacts ATP; the sequence is GFSGAGKS.

It belongs to the ABC transporter superfamily. Methionine importer (TC 3.A.1.24) family. The complex is composed of two ATP-binding proteins (MetN), two transmembrane proteins (MetI) and a solute-binding protein (MetQ).

Its subcellular location is the cell membrane. It carries out the reaction L-methionine(out) + ATP + H2O = L-methionine(in) + ADP + phosphate + H(+). The catalysed reaction is D-methionine(out) + ATP + H2O = D-methionine(in) + ADP + phosphate + H(+). Functionally, part of the ABC transporter complex MetNIQ involved in methionine import. Responsible for energy coupling to the transport system. This is Methionine import ATP-binding protein MetN 2 from Staphylococcus aureus (strain N315).